A 113-amino-acid chain; its full sequence is Iron-sulfur cluster insertion protein ErpA (113 aa).

Residues C41, C105, and C107 each coordinate iron-sulfur cluster.

The protein belongs to the HesB/IscA family. Homodimer. Requires iron-sulfur cluster as cofactor.

Functionally, required for insertion of 4Fe-4S clusters for at least IspG. This is Iron-sulfur cluster insertion protein ErpA from Photobacterium profundum (strain SS9).